Here is a 329-residue protein sequence, read N- to C-terminus: 4-hydroxythreonine-4-phosphate dehydrogenase (329 aa).

Substrate is bound by residues His-136 and Thr-137. Residues His-166, His-211, and His-266 each contribute to the a divalent metal cation site. Lys-274, Asn-283, and Arg-292 together coordinate substrate.

The protein belongs to the PdxA family. In terms of assembly, homodimer. Zn(2+) serves as cofactor. Mg(2+) is required as a cofactor. It depends on Co(2+) as a cofactor.

Its subcellular location is the cytoplasm. It carries out the reaction 4-(phosphooxy)-L-threonine + NAD(+) = 3-amino-2-oxopropyl phosphate + CO2 + NADH. The protein operates within cofactor biosynthesis; pyridoxine 5'-phosphate biosynthesis; pyridoxine 5'-phosphate from D-erythrose 4-phosphate: step 4/5. In terms of biological role, catalyzes the NAD(P)-dependent oxidation of 4-(phosphooxy)-L-threonine (HTP) into 2-amino-3-oxo-4-(phosphooxy)butyric acid which spontaneously decarboxylates to form 3-amino-2-oxopropyl phosphate (AHAP). The chain is 4-hydroxythreonine-4-phosphate dehydrogenase from Escherichia coli O6:H1 (strain CFT073 / ATCC 700928 / UPEC).